Reading from the N-terminus, the 342-residue chain is UHRF1-like protein (342 aa).

Positions 41–149 are disordered; the sequence is SEATTLATPS…SHPGSEEEDI (109 aa). A compositionally biased stretch (polar residues) spans 42–59; sequence EATTLATPSNLKTAGNQR. The span at 74–90 shows a compositional bias: basic and acidic residues; sequence NRSDSPRKRPTKDREDL. Residues 115 to 141 are compositionally biased toward polar residues; the sequence is TREQVTFNSDRDTPNTPSRQIKSTHSH. Positions 168–322 constitute a YDG domain; the sequence is GHIPGIGVGK…LMVCRYAFKR (155 aa). Asp218 contacts DNA. The tract at residues 236–257 is disordered; that stretch reads KGTKQNPKNLRTAPQTSHQSFD. The span at 238–257 shows a compositional bias: polar residues; that stretch reads TKQNPKNLRTAPQTSHQSFD.

Its subcellular location is the nucleus. In terms of biological role, involved in the maintenance of DNA methylation. Binds hemimethylated DNA. This chain is UHRF1-like protein, found in Cryptococcus neoformans var. grubii serotype A (strain H99 / ATCC 208821 / CBS 10515 / FGSC 9487) (Filobasidiella neoformans var. grubii).